A 720-amino-acid chain; its full sequence is Polyribonucleotide nucleotidyltransferase (720 aa).

2 residues coordinate Mg(2+): aspartate 487 and aspartate 493. Residues 554–613 (PRIETFKIPTDKIREVIGTGGKVIREIVEKTGAKVNIEDDGTVKVASSDGEAMKAAIKWI) form the KH domain. Residues 623 to 691 (GQIYDGTVVK…DRGKTRLSMK (69 aa)) form the S1 motif domain. Residues 699–720 (EDLEAKDKVAEGEKAPREAAGE) are disordered. Positions 701-720 (LEAKDKVAEGEKAPREAAGE) are enriched in basic and acidic residues.

Belongs to the polyribonucleotide nucleotidyltransferase family. It depends on Mg(2+) as a cofactor.

Its subcellular location is the cytoplasm. The enzyme catalyses RNA(n+1) + phosphate = RNA(n) + a ribonucleoside 5'-diphosphate. Functionally, involved in mRNA degradation. Catalyzes the phosphorolysis of single-stranded polyribonucleotides processively in the 3'- to 5'-direction. The protein is Polyribonucleotide nucleotidyltransferase of Bradyrhizobium diazoefficiens (strain JCM 10833 / BCRC 13528 / IAM 13628 / NBRC 14792 / USDA 110).